The following is a 909-amino-acid chain: DNA mismatch repair protein MutS (909 aa).

ATP is bound at residue 614-621; sequence GPNMAGKS. The tract at residues 798–827 is disordered; it reads LEENSPQNNDISKESSSSSNSHDKLESSVI. Residues 818–827 are compositionally biased toward basic and acidic residues; it reads SHDKLESSVI.

Belongs to the DNA mismatch repair MutS family.

In terms of biological role, this protein is involved in the repair of mismatches in DNA. It is possible that it carries out the mismatch recognition step. This protein has a weak ATPase activity. The protein is DNA mismatch repair protein MutS of Clostridium novyi (strain NT).